The sequence spans 550 residues: Hydroxylamine reductase (550 aa).

Cys3, Cys6, Cys18, and Cys25 together coordinate [2Fe-2S] cluster. 8 residues coordinate hybrid [4Fe-2O-2S] cluster: His249, Glu273, Cys317, Cys405, Cys433, Cys458, Glu492, and Lys494. At Cys405 the chain carries Cysteine persulfide.

The protein belongs to the HCP family. It depends on [2Fe-2S] cluster as a cofactor. Hybrid [4Fe-2O-2S] cluster is required as a cofactor.

It localises to the cytoplasm. The catalysed reaction is A + NH4(+) + H2O = hydroxylamine + AH2 + H(+). Functionally, catalyzes the reduction of hydroxylamine to form NH(3) and H(2)O. The chain is Hydroxylamine reductase from Escherichia fergusonii (strain ATCC 35469 / DSM 13698 / CCUG 18766 / IAM 14443 / JCM 21226 / LMG 7866 / NBRC 102419 / NCTC 12128 / CDC 0568-73).